We begin with the raw amino-acid sequence, 371 residues long: Probable dual-specificity RNA methyltransferase RlmN (371 aa).

The Proton acceptor role is filled by E114. The 227-residue stretch at 120 to 346 (DGPRRSICVS…ESAGVNVNFR (227 aa)) folds into the Radical SAM core domain. Cysteines 127 and 357 form a disulfide. C134, C138, and C141 together coordinate [4Fe-4S] cluster. Residues 183 to 184 (GE), S215, 238 to 240 (SLH), and N314 contribute to the S-adenosyl-L-methionine site. The active-site S-methylcysteine intermediate is the C357.

It belongs to the radical SAM superfamily. RlmN family. Requires [4Fe-4S] cluster as cofactor.

It is found in the cytoplasm. It catalyses the reaction adenosine(2503) in 23S rRNA + 2 reduced [2Fe-2S]-[ferredoxin] + 2 S-adenosyl-L-methionine = 2-methyladenosine(2503) in 23S rRNA + 5'-deoxyadenosine + L-methionine + 2 oxidized [2Fe-2S]-[ferredoxin] + S-adenosyl-L-homocysteine. It carries out the reaction adenosine(37) in tRNA + 2 reduced [2Fe-2S]-[ferredoxin] + 2 S-adenosyl-L-methionine = 2-methyladenosine(37) in tRNA + 5'-deoxyadenosine + L-methionine + 2 oxidized [2Fe-2S]-[ferredoxin] + S-adenosyl-L-homocysteine. Functionally, specifically methylates position 2 of adenine 2503 in 23S rRNA and position 2 of adenine 37 in tRNAs. In Rhodopirellula baltica (strain DSM 10527 / NCIMB 13988 / SH1), this protein is Probable dual-specificity RNA methyltransferase RlmN.